A 64-amino-acid chain; its full sequence is Large ribosomal subunit protein uL30 (64 aa).

It belongs to the universal ribosomal protein uL30 family. Part of the 50S ribosomal subunit.

This Rhodopseudomonas palustris (strain BisA53) protein is Large ribosomal subunit protein uL30.